A 616-amino-acid chain; its full sequence is Protein cereblon (616 aa).

Disordered regions lie at residues 1 to 39, 63 to 137, and 182 to 220; these read MDEE…DDSV, FGPS…AMPR, and SQER…DIDM. The segment covering 11 to 32 has biased composition (low complexity); it reads AQEQEVAGSAGEAAAGPSGAEV. A compositionally biased stretch (acidic residues) spans 96-107; the sequence is SEEDIVLDDGTE. The segment covering 183–192 has biased composition (basic and acidic residues); it reads QERRRSRNSD. A compositionally biased stretch (acidic residues) spans 194-203; that stretch reads VSPEAEDDEL. Over residues 206 to 215 the composition is skewed to pro residues; that stretch reads HPPPPPPRPP. One can recognise a Lon N-terminal domain in the interval 257–482; it reads HMLIFLHQYI…LIGGILKEET (226 aa). The CULT domain maps to 481-590; the sequence is ETLFYCRYCN…LAGSSVRIGK (110 aa). The Zn(2+) site is built by Cys486, Cys489, Cys555, and Cys558.

The protein belongs to the CRBN family. Likely a component of a DCX (DDB1-CUL4-X-box) protein ligase complex. May interact with pic/DDB1. Ubiquitinated.

The protein resides in the nucleus. It participates in protein modification; protein ubiquitination. Substrate recognition component of a DCX (DDB1-CUL4-X-box) E3 protein ligase complex that mediates the ubiquitination and subsequent proteasomal degradation of target proteins. Has an essential role in mediating growth by negatively regulating insulin signaling. It also has a role in maintaining presynaptic function in the neuromuscular junction synapses of third-instar larvae. The protein is Protein cereblon of Drosophila persimilis (Fruit fly).